A 628-amino-acid polypeptide reads, in one-letter code: Chaperone protein HtpG (628 aa).

The a; substrate-binding stretch occupies residues M1 to R337. Residues E338 to K554 form a b region. The segment at M555–R628 is c.

It belongs to the heat shock protein 90 family. In terms of assembly, homodimer.

The protein localises to the cytoplasm. Molecular chaperone. Has ATPase activity. The chain is Chaperone protein HtpG from Francisella tularensis subsp. tularensis (strain WY96-3418).